Reading from the N-terminus, the 64-residue chain is Large ribosomal subunit protein bL35 (64 aa).

Residues 1–14 show a composition bias toward basic residues; sequence MKQKTHKGAAKRIK. Residues 1–50 form a disordered region; the sequence is MKQKTHKGAAKRIKISGSGKLRREQANRRHLLEGKPSKRTRRLKGTEDVA. Residues 21 to 36 are compositionally biased toward basic and acidic residues; it reads LRREQANRRHLLEGKP.

Belongs to the bacterial ribosomal protein bL35 family.

This chain is Large ribosomal subunit protein bL35, found in Corynebacterium jeikeium (strain K411).